The following is a 375-amino-acid chain: MNFSKLKFGATIGIIGGGQLGKMMAQSAQKMGYKVIVLDPNEDCPCRYVAHQFIHANYDDEQALNQLGENSDVVTYEFENISSEQLKKLTQLYHIPQGYQAIELLQDRLTEKQTLLEANTQIVPFVQIQTNQDLLKAIEKLGFPFIVKTRFGGYDGKGQILVRNDSELDEAYQLVEKQECVAEQYLDIQKEVSLTVTIGNEQQTTYFPLQENEHQNQILFKTVVPARSDKENEARKEVEKITRAIHFVGTFTVEFFIDKENNLYVNEIAPRPHNSGHYSIEACDYSQFDTHILAITGQKLPQAIELLKPTVMMNLLGRDLDLLENEFSRHPDWHIHIYGKKERKPDRKMGHMTLLTDDVNQTEQYMLMKFEGRDK.

Residues R108, K148, 153–159 (GYDGKGQ), 183–186 (EQYL), E191, H214, and 266–267 (NE) contribute to the ATP site. An ATP-grasp domain is found at 112-296 (KQTLLEANTQ…QFDTHILAIT (185 aa)).

The protein belongs to the PurK/PurT family. Homodimer.

The enzyme catalyses 5-amino-1-(5-phospho-beta-D-ribosyl)imidazole + hydrogencarbonate + ATP = 5-carboxyamino-1-(5-phospho-D-ribosyl)imidazole + ADP + phosphate + 2 H(+). It functions in the pathway purine metabolism; IMP biosynthesis via de novo pathway; 5-amino-1-(5-phospho-D-ribosyl)imidazole-4-carboxylate from 5-amino-1-(5-phospho-D-ribosyl)imidazole (N5-CAIR route): step 1/2. Functionally, catalyzes the ATP-dependent conversion of 5-aminoimidazole ribonucleotide (AIR) and HCO(3)(-) to N5-carboxyaminoimidazole ribonucleotide (N5-CAIR). The sequence is that of N5-carboxyaminoimidazole ribonucleotide synthase from Staphylococcus epidermidis (strain ATCC 12228 / FDA PCI 1200).